Consider the following 505-residue polypeptide: ATP synthase subunit alpha (505 aa).

Position 170–177 (Gly170–Ser177) interacts with ATP.

The protein belongs to the ATPase alpha/beta chains family. In terms of assembly, F-type ATPases have 2 components, CF(1) - the catalytic core - and CF(0) - the membrane proton channel. CF(1) has five subunits: alpha(3), beta(3), gamma(1), delta(1), epsilon(1). CF(0) has four main subunits: a(1), b(1), b'(1) and c(9-12).

The protein resides in the cellular thylakoid membrane. The enzyme catalyses ATP + H2O + 4 H(+)(in) = ADP + phosphate + 5 H(+)(out). Functionally, produces ATP from ADP in the presence of a proton gradient across the membrane. The alpha chain is a regulatory subunit. The protein is ATP synthase subunit alpha of Prochlorococcus marinus (strain MIT 9215).